Here is a 421-residue protein sequence, read N- to C-terminus: MSKLTIVRGFNDVLPLDSYKWQLLESKVKLILDRYNYSETRLPIVERSELFHRSVGESSDIVSKETYDFQDRNGDSLTLRPEGTAGCVRMVIENNLATRGQTQKLWYCGPMFRYERPQKGRYRQFYQLGVEAYGFDGIAIDLEVIAIAWSLFKELGIYEYVTLELNSLGSSLNRQEYTQALLQYLKPYHAELDEDSIKRLDKNPLRILDSKIEKTQKILANAPKLIDFIDHDLRLRFKQTCQYLDALGVRYKLNENLVRGLDYYTGLVFEWTTDKLGSQSAICAGGRYDGLVENLGGQKTAAIGFAIGMERLLLLLEDLGKLPNQDNACDVFFILDSAQLHQSLAIVENIRQELPQLKIDMDLKFGSFKSQFKKADKSGAKVAIIIGQDELDNGFAGIKFLQQNEEQQQVAFNELINFLER.

Belongs to the class-II aminoacyl-tRNA synthetase family. Homodimer.

Its subcellular location is the cytoplasm. The catalysed reaction is tRNA(His) + L-histidine + ATP = L-histidyl-tRNA(His) + AMP + diphosphate + H(+). The polypeptide is Histidine--tRNA ligase (Francisella tularensis subsp. tularensis (strain SCHU S4 / Schu 4)).